The primary structure comprises 417 residues: Transmembrane protease serine 11D (417 aa).

The Cytoplasmic segment spans residues 1 to 17 (MYRPRSMVSPSRFFNPF). A helical; Signal-anchor for type II membrane protein transmembrane segment spans residues 18 to 38 (MVALIVIITVGLLAMTAGLLI). The Extracellular segment spans residues 39–417 (HFLAFDKRAY…RNWIRQQTGI (379 aa)). The 117-residue stretch at 46–162 (RAYFYHSNFH…SNGITSLTDQ (117 aa)) folds into the SEA domain. Disulfide bonds link C172–C291, C211–C227, C336–C352, and C363–C392. In terms of domain architecture, Peptidase S1 spans 186–416 (IIGGTQAETG…YRNWIRQQTG (231 aa)). Residues H226 and D271 each act as charge relay system in the active site. Catalysis depends on S367, which acts as the Charge relay system.

It belongs to the peptidase S1 family. As to quaternary structure, monomer. Isoform 1 and isoform 2 are expressed in the esophagus, tongue and trachea. Isoform 2 is also highly expressed in the adrenal cortex and heart.

The protein localises to the cell membrane. Its subcellular location is the secreted. In terms of biological role, may play some biological role in the host defense system on the mucous membrane independently of or in cooperation with other substances in airway mucous or bronchial secretions. Plays a role in the proteolytic processing of ACE2. Preferentially cleaves the C-terminal side of arginine residues at the P1 position of certain peptides. Isoform 2 may play a key role in regulating adrenal proliferation by specifically cleaving N-POMC. This is Transmembrane protease serine 11D (Tmprss11d) from Rattus norvegicus (Rat).